The chain runs to 4069 residues: Cardiomyopathy-associated protein 5 (4069 aa).

Disordered regions lie at residues 1–177 (MASR…SQVL), 341–387 (TVPS…DTPA), 442–525 (GLAA…EDSN), 538–558 (ESPL…VEHK), 597–705 (EYSV…VPSL), 732–793 (PSEE…RFTP), 844–872 (SSPD…APPL), 890–948 (LERY…FSPD), 979–1009 (TSPS…VSIP), 1041–1097 (ADEE…PEIP), 1160–1179 (VKEE…SVPA), 1205–1237 (RKEE…PESE), 1540–1575 (KETE…ELEN), 1594–1742 (PAVE…EEFQ), 1757–1809 (HPAD…ITEP), 1892–1988 (ENWM…VKLA), 2064–2175 (TISS…KKGI), 2187–2259 (FGSS…SGDG), 2385–2412 (PQQP…SIIL), 2425–2463 (SEDR…LENR), 2494–2527 (TQIT…NERP), 2653–2706 (QEGN…VGTQ), and 2750–2862 (SSRD…SDVP). Positions 27–47 (ETEEESEGEEDETAAESEEEP) are enriched in acidic residues. Over residues 48–62 (DSRLSDQDEEGKIKQ) the composition is skewed to basic and acidic residues. A compositionally biased stretch (polar residues) spans 84–119 (TWETNSSRSSTPWASEESQTSGVCSREGSTVNSPPG). Positions 130-153 (KVRKRTHKSKHGSPSLRRKGNRKR) are enriched in basic residues. Residue S155 is modified to Phosphoserine. 2 stretches are compositionally biased toward polar residues: residues 156-177 (FESQ…SQVL) and 341-350 (TVPSYSSSGR). Positions 489 to 499 (LEPSISLSEPL) are enriched in low complexity. Positions 500–510 (MLEEPEKEEIE) are enriched in acidic residues. The residue at position 631 (S631) is a Phosphoserine. The segment covering 640 to 659 (AYSPAAAPTSESSLSPSTTE) has biased composition (low complexity). Composition is skewed to polar residues over residues 664-673 (NQSPLFSTVT), 692-701 (PDSTSASEYS), and 752-775 (PSLS…TATS). The segment covering 1049 to 1063 (TAATPVSEQFSSSQK) has biased composition (polar residues). A compositionally biased stretch (basic and acidic residues) spans 1085-1094 (DKSEKAEIKP). The span at 1214-1223 (QEATAHVSQD) shows a compositional bias: polar residues. Basic and acidic residues predominate over residues 1621-1630 (EPEKKDKPHQ). A compositionally biased stretch (polar residues) spans 1639 to 1662 (SEFSSDLGRQSGSIGTKQAKSPIT). Basic and acidic residues-rich tracts occupy residues 1668-1687 (VLEK…ENRE), 1704-1714 (LREESQNEEIK), and 1786-1795 (ILDKLSEETG). The segment covering 1796–1808 (HPNSSQVLQSITE) has biased composition (polar residues). A compositionally biased stretch (basic and acidic residues) spans 1935–1955 (SKDHTCEVRKQVLPHSAEESH). Over residues 1956 to 1980 (LSSQEAVSALDTSSGNTETLSSKSY) the composition is skewed to polar residues. The span at 2085-2124 (NEKEAHRSTPPFPEEKPLEESKMVQSKVIDDADEGKKPSP) shows a compositional bias: basic and acidic residues. The span at 2145–2155 (SPESPEVTQNP) shows a compositional bias: polar residues. Basic and acidic residues-rich tracts occupy residues 2162-2172 (AKPDLPEEKGK) and 2232-2250 (KPAD…DEPR). The segment covering 2387-2399 (QPKSASSNFASKN) has biased composition (polar residues). Position 2404 is a phosphoserine (S2404). Residues 2441 to 2461 (ISEEETKLRSVSPTEKKDNLE) show a composition bias toward basic and acidic residues. Composition is skewed to basic and acidic residues over residues 2661 to 2681 (KSSR…ESEL), 2750 to 2769 (SSRD…ESEL), and 2777 to 2804 (ITKE…ETKS). S2813 carries the phosphoserine modification. Over residues 2830-2847 (AVKKKEMPRSELTPERHT) the composition is skewed to basic and acidic residues. Residues 2964–2988 (SIDQEESEQMQDKLEYLEEKASFKT) are a coiled coil. Basic and acidic residues predominate over residues 3015–3031 (PLKENKQKETHKTKEEI). Disordered stretches follow at residues 3015–3037 (PLKE…DSET), 3119–3156 (EKGH…PGMP), 3204–3231 (KKKE…SDTD), 3386–3421 (SGAT…QDEY), and 3465–3495 (EFAS…SSEV). Residues 3052–3365 (YFEKYTLIDY…GSHGNEVGNA (314 aa)) form a required for RYR2 clustering region. Polar residues predominate over residues 3128–3138 (PETQSQNSADR). The segment covering 3139 to 3150 (NVSKDTKRDVDS) has biased composition (basic and acidic residues). A compositionally biased stretch (polar residues) spans 3213–3227 (EGDSVNSEASFPSRN). Residue S3228 is modified to Phosphoserine. A compositionally biased stretch (basic and acidic residues) spans 3477 to 3489 (EQKELGSERKEED). An amphipathic helix H1 region spans residues 3517-3544 (KCPISATDKVFGTHKDHEVSTLDTAISA). Residues 3544–3653 (AVKVQLAEFL…REAEELDEAV (110 aa)) are a coiled coil. The tract at residues 3545–3672 (VKVQLAEFLE…ERLLSAMEST (128 aa)) is B-box coiled-coil; BBC. Residues 3631–3648 (SMDTAKDTLETIVREAEE) form an amphipathic helix H2 region. 2 consecutive Fibronectin type-III domains span residues 3704–3805 (VPQP…TAPS) and 3806–3898 (TPVI…TRGT). The tract at residues 3751–3767 (EVNELVEEYRLTVKESY) is amphipathic helix H3. The region spanning 3880–4065 (NAFGTSEQSE…LHLGIEPPDS (186 aa)) is the B30.2/SPRY domain.

In terms of assembly, interacts with PRKAR2A. Interacts with ACTN2 and DTNBP1/dysbindin. Interacts with DES. Interacts with DMD/dystrophin. Interacts with the calcineurin catalytic subunit PPP3CA. Interacts with TTN. Interacts with CAPN3; this interaction, which results in CMYA5 proteolysis, may protect CAPN3 from autolysis. Interacts with FSD2. Identified in a complex composed of FSD2, CMYA5 and RYR2. Post-translationally, phosphorylated by PKA. In terms of tissue distribution, expressed in skeletal muscle; at a strong level and in heart.

It localises to the nucleus. The protein localises to the sarcoplasmic reticulum. It is found in the cytoplasm. Its subcellular location is the perinuclear region. The protein resides in the myofibril. It localises to the sarcomere. The protein localises to the m line. Functionally, may serve as an anchoring protein that mediates the subcellular compartmentation of protein kinase A (PKA) via binding to PRKAR2A. May function as a repressor of calcineurin-mediated transcriptional activity. May attenuate calcineurin ability to induce slow-fiber gene program in muscle and may negatively modulate skeletal muscle regeneration. Plays a role in the assembly of ryanodine receptor (RYR2) clusters in striated muscle. This chain is Cardiomyopathy-associated protein 5 (CMYA5), found in Homo sapiens (Human).